The primary structure comprises 118 residues: Large ribosomal subunit protein bL17 (118 aa).

This sequence belongs to the bacterial ribosomal protein bL17 family. As to quaternary structure, part of the 50S ribosomal subunit. Contacts protein L32.

The chain is Large ribosomal subunit protein bL17 from Aster yellows witches'-broom phytoplasma (strain AYWB).